Here is a 216-residue protein sequence, read N- to C-terminus: Probable nicotinate-nucleotide adenylyltransferase (216 aa).

Belongs to the NadD family.

The enzyme catalyses nicotinate beta-D-ribonucleotide + ATP + H(+) = deamido-NAD(+) + diphosphate. The protein operates within cofactor biosynthesis; NAD(+) biosynthesis; deamido-NAD(+) from nicotinate D-ribonucleotide: step 1/1. Functionally, catalyzes the reversible adenylation of nicotinate mononucleotide (NaMN) to nicotinic acid adenine dinucleotide (NaAD). The chain is Probable nicotinate-nucleotide adenylyltransferase from Geobacter sulfurreducens (strain ATCC 51573 / DSM 12127 / PCA).